The primary structure comprises 380 residues: Erythronate-4-phosphate dehydrogenase (380 aa).

Positions 45 and 66 each coordinate substrate. NAD(+) contacts are provided by residues 126–127 (QV), aspartate 146, threonine 175, 206–208 (ASR), and aspartate 232. Arginine 208 is a catalytic residue. Residue glutamate 237 is part of the active site. The Proton donor role is filled by histidine 254. Position 257 (glycine 257) interacts with NAD(+). Substrate is bound at residue tyrosine 258.

It belongs to the D-isomer specific 2-hydroxyacid dehydrogenase family. PdxB subfamily. In terms of assembly, homodimer.

Its subcellular location is the cytoplasm. It carries out the reaction 4-phospho-D-erythronate + NAD(+) = (R)-3-hydroxy-2-oxo-4-phosphooxybutanoate + NADH + H(+). The protein operates within cofactor biosynthesis; pyridoxine 5'-phosphate biosynthesis; pyridoxine 5'-phosphate from D-erythrose 4-phosphate: step 2/5. In terms of biological role, catalyzes the oxidation of erythronate-4-phosphate to 3-hydroxy-2-oxo-4-phosphonooxybutanoate. This Pseudomonas paraeruginosa (strain DSM 24068 / PA7) (Pseudomonas aeruginosa (strain PA7)) protein is Erythronate-4-phosphate dehydrogenase.